Reading from the N-terminus, the 534-residue chain is ATP-dependent RNA helicase DBP3 (534 aa).

The segment at 1–96 (MGSKRKHESG…VSSSSSGYTQ (96 aa)) is disordered. The segment covering 8–30 (ESGDVEVKKPKHDNEVKGKEKKE) has biased composition (basic and acidic residues). A compositionally biased stretch (basic residues) spans 31–53 (KKEKKEKKEKKEKKEKKEKKEKK). Residues 54–63 (EKKEKNEKKE) show a composition bias toward basic and acidic residues. The segment covering 82 to 92 (STVSTVSSSSS) has biased composition (low complexity). Residues 131–157 (LSFDHVQLQSKIAPIVTKFPKPTPIQS) carry the Q motif motif. The Helicase ATP-binding domain occupies 160–330 (WPYLLNGDDV…ATFMNKAVKV (171 aa)). ATP is bound at residue 173–180 (AETGSGKT). The DEAD box motif lies at 278–281 (DEAD). A Helicase C-terminal domain is found at 359-504 (RLLQLLRQYG…PVPDELLKFG (146 aa)).

The protein belongs to the DEAD box helicase family. DDX5/DBP2 subfamily.

Its subcellular location is the nucleus. The protein resides in the nucleolus. The enzyme catalyses ATP + H2O = ADP + phosphate + H(+). Functionally, ATP-dependent RNA helicase required for 60S ribosomal subunit synthesis. Involved in efficient pre-rRNA processing, predominantly at site A3, which is necessary for the normal formation of 25S and 5.8S rRNAs. In Meyerozyma guilliermondii (strain ATCC 6260 / CBS 566 / DSM 6381 / JCM 1539 / NBRC 10279 / NRRL Y-324) (Yeast), this protein is ATP-dependent RNA helicase DBP3 (DBP3).